The sequence spans 134 residues: uncharacterized protein (134 aa).

The interval 1–30 is disordered; the sequence is MGTLQGAALRSRERPSWPQETHGHRERTEE. A compositionally biased stretch (basic and acidic residues) spans 10-30; it reads RSRERPSWPQETHGHRERTEE.

This is an uncharacterized protein from Homo sapiens (Human).